We begin with the raw amino-acid sequence, 289 residues long: Beta-lactamase Toho-2 (289 aa).

An N-terminal signal peptide occupies residues 1 to 28; sequence MVTKRVQRMMSAAAACIPLLLGSPTLYA. Ser73 (acyl-ester intermediate) is an active-site residue. 235–237 contacts substrate; that stretch reads KTG.

Belongs to the class-A beta-lactamase family.

The enzyme catalyses a beta-lactam + H2O = a substituted beta-amino acid. Its activity is regulated as follows. Inhibited 16-fold better by the beta-lactamase inhibitor tazobactam than by clavulanic acid. Its function is as follows. Hydrolyzes beta-lactam antibiotics such as penicillin G, carbenicillin, cephaloridine, cefoxitin, cefotaxime, ceftazidime, and aztreonam. Has especially increased relative hydrolysis rates for cephalothin, cephaloridine, cefotaxime and ceftizoxime. This chain is Beta-lactamase Toho-2 (bla), found in Escherichia coli.